We begin with the raw amino-acid sequence, 804 residues long: Leucine--tRNA ligase (804 aa).

The short motif at 39–50 (PYPSGAGLHVGH) is the 'HIGH' region element. Positions 580–584 (KMSKS) match the 'KMSKS' region motif. Lysine 583 serves as a coordination point for ATP.

The protein belongs to the class-I aminoacyl-tRNA synthetase family.

The protein localises to the cytoplasm. It catalyses the reaction tRNA(Leu) + L-leucine + ATP = L-leucyl-tRNA(Leu) + AMP + diphosphate. This is Leucine--tRNA ligase from Mycoplasma mycoides subsp. mycoides SC (strain CCUG 32753 / NCTC 10114 / PG1).